The primary structure comprises 232 residues: Large ribosomal subunit protein uL1 (232 aa).

This sequence belongs to the universal ribosomal protein uL1 family. Part of the 50S ribosomal subunit.

Binds directly to 23S rRNA. The L1 stalk is quite mobile in the ribosome, and is involved in E site tRNA release. Its function is as follows. Protein L1 is also a translational repressor protein, it controls the translation of the L11 operon by binding to its mRNA. The protein is Large ribosomal subunit protein uL1 of Bartonella bacilliformis (strain ATCC 35685 / KC583 / Herrer 020/F12,63).